The following is a 394-amino-acid chain: Elongation factor Tu (394 aa).

Positions 10-204 (KEHVNVGTIG…AVDTYIENPV (195 aa)) constitute a tr-type G domain. The G1 stretch occupies residues 19–26 (GHVDHGKT). A GTP-binding site is contributed by 19–26 (GHVDHGKT). Position 26 (T26) interacts with Mg(2+). A G2 region spans residues 60-64 (GITIN). The interval 81–84 (DCPG) is G3. Residues 81 to 85 (DCPGH) and 136 to 139 (NKCD) each bind GTP. The interval 136–139 (NKCD) is G4. The segment at 174 to 176 (SAL) is G5.

It belongs to the TRAFAC class translation factor GTPase superfamily. Classic translation factor GTPase family. EF-Tu/EF-1A subfamily. As to quaternary structure, monomer.

Its subcellular location is the cytoplasm. It catalyses the reaction GTP + H2O = GDP + phosphate + H(+). In terms of biological role, GTP hydrolase that promotes the GTP-dependent binding of aminoacyl-tRNA to the A-site of ribosomes during protein biosynthesis. The polypeptide is Elongation factor Tu (Mycoplasmopsis synoviae (strain 53) (Mycoplasma synoviae)).